The primary structure comprises 238 residues: Probable transcriptional regulatory protein CTA_0499 (238 aa).

The segment at 1-21 (MAGHSKWANTKHRKERADHKK) is disordered. Basic residues predominate over residues 9–21 (NTKHRKERADHKK).

Belongs to the TACO1 family.

It localises to the cytoplasm. The sequence is that of Probable transcriptional regulatory protein CTA_0499 from Chlamydia trachomatis serovar A (strain ATCC VR-571B / DSM 19440 / HAR-13).